Reading from the N-terminus, the 56-residue chain is UPF0391 membrane protein Noc_0484 (56 aa).

2 consecutive transmembrane segments (helical) span residues 6–26 (VTFL…IAGI) and 29–49 (EIAW…LVLG).

The protein belongs to the UPF0391 family.

It localises to the cell membrane. The polypeptide is UPF0391 membrane protein Noc_0484 (Nitrosococcus oceani (strain ATCC 19707 / BCRC 17464 / JCM 30415 / NCIMB 11848 / C-107)).